The primary structure comprises 131 residues: Glycine cleavage system H protein (131 aa).

The Lipoyl-binding domain occupies 24 to 106 (IATIGISAFA…YGEGWLLKLR (83 aa)). N6-lipoyllysine is present on Lys65.

It belongs to the GcvH family. The glycine cleavage system is composed of four proteins: P, T, L and H. (R)-lipoate serves as cofactor.

Functionally, the glycine cleavage system catalyzes the degradation of glycine. The H protein shuttles the methylamine group of glycine from the P protein to the T protein. The polypeptide is Glycine cleavage system H protein (Gloeothece citriformis (strain PCC 7424) (Cyanothece sp. (strain PCC 7424))).